The sequence spans 233 residues: Probable endonuclease lcl3 (233 aa).

Residues 10–29 (ISLRNLSYIILTISTGIVIH) traverse the membrane as a helical segment. A TNase-like domain is found at 57–218 (NSLYGYVTSV…RKRKLGMHSL (162 aa)). The active site involves Arg-106. Asp-111 lines the Ca(2+) pocket. Residues Glu-114 and Arg-154 contribute to the active site.

Belongs to the LCL3 family.

It localises to the mitochondrion. The protein localises to the membrane. The polypeptide is Probable endonuclease lcl3 (lcl3) (Schizosaccharomyces japonicus (strain yFS275 / FY16936) (Fission yeast)).